The chain runs to 565 residues: NAD-dependent malic enzyme (565 aa).

Residue Tyr104 is the Proton donor of the active site. Residue Arg157 coordinates NAD(+). The Proton acceptor role is filled by Lys175. A divalent metal cation-binding residues include Glu246, Asp247, and Asp270. NAD(+) is bound by residues Asp270 and Asn418.

The protein belongs to the malic enzymes family. Homotetramer. It depends on Mg(2+) as a cofactor. Mn(2+) serves as cofactor.

It catalyses the reaction (S)-malate + NAD(+) = pyruvate + CO2 + NADH. The enzyme catalyses oxaloacetate + H(+) = pyruvate + CO2. The chain is NAD-dependent malic enzyme from Escherichia coli O139:H28 (strain E24377A / ETEC).